The sequence spans 1169 residues: Transcription-repair-coupling factor (1169 aa).

Positions 634 to 795 (DMERARPMDR…MLGVRDLSVI (162 aa)) constitute a Helicase ATP-binding domain. 647–654 (GDVGYGKT) lines the ATP pocket. Residues 748 to 751 (DEEQ) carry the DEEQ box motif. The 162-residue stretch at 809–970 (VLEQNTNFIK…GFKIAMRDLN (162 aa)) folds into the Helicase C-terminal domain.

In the N-terminal section; belongs to the UvrB family. The protein in the C-terminal section; belongs to the helicase family. RecG subfamily.

It localises to the cytoplasm. In terms of biological role, couples transcription and DNA repair by recognizing RNA polymerase (RNAP) stalled at DNA lesions. Mediates ATP-dependent release of RNAP and its truncated transcript from the DNA, and recruitment of nucleotide excision repair machinery to the damaged site. The sequence is that of Transcription-repair-coupling factor from Staphylococcus epidermidis (strain ATCC 12228 / FDA PCI 1200).